The following is a 105-amino-acid chain: Sec-independent protein translocase protein TatA (105 aa).

Residues 1 to 21 (MSLGPWEIGIIVLLIIVLFGA) traverse the membrane as a helical segment. Positions 41–50 (EVKEMNKDGD) are enriched in basic and acidic residues. The disordered stretch occupies residues 41 to 105 (EVKEMNKDGD…QNYEDPNRTS (65 aa)). Residues 52 to 92 (PEQQQQPQQQIAPNQIEAPQPNFEQHYQGQQVQQPQNPQTP) show a composition bias toward low complexity. Positions 96–105 (QNYEDPNRTS) are enriched in basic and acidic residues.

The protein belongs to the TatA/E family. As to quaternary structure, the Tat system comprises two distinct complexes: a TatABC complex, containing multiple copies of TatA, TatB and TatC subunits, and a separate TatA complex, containing only TatA subunits. Substrates initially bind to the TatABC complex, which probably triggers association of the separate TatA complex to form the active translocon.

Its subcellular location is the cell membrane. Its function is as follows. Part of the twin-arginine translocation (Tat) system that transports large folded proteins containing a characteristic twin-arginine motif in their signal peptide across membranes. TatA could form the protein-conducting channel of the Tat system. The polypeptide is Sec-independent protein translocase protein TatA (Corynebacterium glutamicum (strain ATCC 13032 / DSM 20300 / JCM 1318 / BCRC 11384 / CCUG 27702 / LMG 3730 / NBRC 12168 / NCIMB 10025 / NRRL B-2784 / 534)).